Consider the following 642-residue polypeptide: Acid beta-fructofuranosidase (642 aa).

The Cytoplasmic portion of the chain corresponds to 1–22 (MRNDSPYTPLLNASHNNHRRRE). The propeptide at 1–95 (MRNDSPYTPL…LSGNLVGEGG (95 aa)) is removed in mature form. The helical; Signal-anchor for type II membrane protein transmembrane segment at 23-43 (LLLLFSGLLLLASIIAFSAYI) threads the bilayer. Topologically, residues 44-642 (AQPHADADVS…YHPDQKRQTS (599 aa)) are lumenal. A glycan (N-linked (GlcNAc...) asparagine) is linked at Asn100. Substrate contacts are provided by residues 119 to 122 (WMND), Gln138, Trp146, 181 to 182 (WT), and 245 to 246 (RD). Asp122 is a catalytic residue. A glycan (N-linked (GlcNAc...) asparagine) is linked at Asn267. Substrate contacts are provided by Glu300 and Asp333. An intrachain disulfide couples Cys490 to Cys538. 2 N-linked (GlcNAc...) asparagine glycosylation sites follow: Asn491 and Asn615.

Belongs to the glycosyl hydrolase 32 family. As to quaternary structure, may be present in two forms, a 70 kDa monomer and a heterodimer of the 30 kDa and 38 kDa subunits. The ratio of the levels of the two forms within cells appears to be regulated developmentally.

It is found in the membrane. The protein localises to the vacuole. The protein resides in the vacuole lumen. The enzyme catalyses Hydrolysis of terminal non-reducing beta-D-fructofuranoside residues in beta-D-fructofuranosides.. The protein operates within glycan biosynthesis; sucrose metabolism. This Vicia faba (Broad bean) protein is Acid beta-fructofuranosidase (VCINV).